The following is a 294-amino-acid chain: Ribosomal RNA small subunit methyltransferase A (294 aa).

The S-adenosyl-L-methionine site is built by Asn31, Leu33, Gly58, Glu79, Asp111, and Asn136.

Belongs to the class I-like SAM-binding methyltransferase superfamily. rRNA adenine N(6)-methyltransferase family. RsmA subfamily.

Its subcellular location is the cytoplasm. The enzyme catalyses adenosine(1518)/adenosine(1519) in 16S rRNA + 4 S-adenosyl-L-methionine = N(6)-dimethyladenosine(1518)/N(6)-dimethyladenosine(1519) in 16S rRNA + 4 S-adenosyl-L-homocysteine + 4 H(+). Specifically dimethylates two adjacent adenosines (A1518 and A1519) in the loop of a conserved hairpin near the 3'-end of 16S rRNA in the 30S particle. May play a critical role in biogenesis of 30S subunits. This chain is Ribosomal RNA small subunit methyltransferase A, found in Lactobacillus helveticus (strain DPC 4571).